The primary structure comprises 327 residues: Probable cell division protein WhiA (327 aa).

Positions 275–308 (SLEELGRLADPQMTKDAVAGRIRRLLTMADKRAE) form a DNA-binding region, H-T-H motif.

The protein belongs to the WhiA family.

In terms of biological role, involved in cell division and chromosome segregation. The protein is Probable cell division protein WhiA of Corynebacterium glutamicum (strain ATCC 13032 / DSM 20300 / JCM 1318 / BCRC 11384 / CCUG 27702 / LMG 3730 / NBRC 12168 / NCIMB 10025 / NRRL B-2784 / 534).